Reading from the N-terminus, the 1415-residue chain is DNA-directed RNA polymerase subunit beta' (1415 aa).

Zn(2+) is bound by residues C70, C72, C85, and C88. The Mg(2+) site is built by D461, D463, and D465. Zn(2+) is bound by residues C820, C894, C901, and C904. Residues 1382 to 1415 (ERERAQAIADEEQSLFIEPPPVVQATTEGEGDNA) are disordered.

Belongs to the RNA polymerase beta' chain family. In terms of assembly, the RNAP catalytic core consists of 2 alpha, 1 beta, 1 beta' and 1 omega subunit. When a sigma factor is associated with the core the holoenzyme is formed, which can initiate transcription. Requires Mg(2+) as cofactor. The cofactor is Zn(2+).

It catalyses the reaction RNA(n) + a ribonucleoside 5'-triphosphate = RNA(n+1) + diphosphate. DNA-dependent RNA polymerase catalyzes the transcription of DNA into RNA using the four ribonucleoside triphosphates as substrates. This Cupriavidus pinatubonensis (strain JMP 134 / LMG 1197) (Cupriavidus necator (strain JMP 134)) protein is DNA-directed RNA polymerase subunit beta'.